The chain runs to 325 residues: MASEVEDGVPVHEEFFLCGGVETQIIKCGPWTNLFDKQGVSKPKHLIFVIPGNPGLSPFYVPFAKALYSLVKGHFPVWIISHAGFCLTPKDKKILTAPQEPNAQEIEDIYGLNGQIEHKIAFLRAHVPKDVKLIFIGHSVGSYIALHVMNRAPELPVVHTFLLFPTIERMSESPNGKFATPFLCRFRYMLYAASYLIFKPCPEMIKSFIVQKVLEKMSFKSELRLTDLLQPFCLANAAYLGGQEMIHVVKRDDGIIKELLPKLTFYYGKTDGWCPVNYYEDMKRDFPEANLHLCEKGIPHAFVLGFSQEMAAMVADWINNRLPKK.

The active-site Nucleophile is the S139. Active-site charge relay system residues include D271 and H300.

It belongs to the AB hydrolase superfamily. LDAH family.

The protein resides in the lipid droplet. Its subcellular location is the endoplasmic reticulum. It carries out the reaction a cholesterol ester + H2O = cholesterol + a fatty acid + H(+). Functionally, probable serine lipid hydrolase associated with lipid droplets. Has low cholesterol esterase activity. Appears to lack triglyceride lipase activity. Involved in cholesterol and triglyceride homeostasis; stimulates cellular triglyceride accumulation and cellular cholesterol release. Acts antagonistically with PNPLA2/ATGL in regulation of cellular lipid stores. May regulate triglyceride accumulation indirectly through stimulation of PNPLA2/ATGL ubiquitination and proteasomal degradation. Promotes microtubule-dependent lipid droplet fusion. Highly expressed in macrophage-rich areas in atherosclerotic lesions, suggesting that it could promote cholesterol ester turnover in macrophages. This chain is Lipid droplet-associated hydrolase, found in Rattus norvegicus (Rat).